Here is a 161-residue protein sequence, read N- to C-terminus: RNA pyrophosphohydrolase (161 aa).

Residues 7 to 149 enclose the Nudix hydrolase domain; it reads KYRPCVGIML…KKEVYKTVIE (143 aa). The short motif at 40 to 61 is the Nudix box element; the sequence is GGIDDGEKLEQAALRELLEEVG.

Belongs to the Nudix hydrolase family. RppH subfamily. Requires a divalent metal cation as cofactor.

Its function is as follows. Accelerates the degradation of transcripts by removing pyrophosphate from the 5'-end of triphosphorylated RNA, leading to a more labile monophosphorylated state that can stimulate subsequent ribonuclease cleavage. The polypeptide is RNA pyrophosphohydrolase (Wolbachia sp. subsp. Brugia malayi (strain TRS)).